Reading from the N-terminus, the 503-residue chain is Hemogen (503 aa).

Composition is skewed to basic residues over residues 1 to 10 (MDMGKGRPRL) and 61 to 79 (KKRKYQRTGKGNKRGRKRQ). The interval 1–129 (MDMGKGRPRL…PLVPSPTKAV (129 aa)) is disordered. The segment at 7 to 87 (RPRLKLPQMP…RQGNVEQKAE (81 aa)) is necessary for nuclear localization. Phosphoserine is present on residues S90, S103, S124, S153, S158, S171, S213, S223, S228, S241, and S269. Residue T286 is modified to Phosphothreonine. The disordered stretch occupies residues 381–503 (QKTIQESPEP…ENGIYSSALF (123 aa)). A compositionally biased stretch (low complexity) spans 385–396 (QESPEPEQYSPE). S387 and S394 each carry phosphoserine. Positions 426–436 (CQDREEPKHSL) are enriched in basic and acidic residues.

In terms of tissue distribution, expressed in hematopoietic precursor cells. Highly expressed in bone marrow, the red pulp of the spleen and round spermatids. Weakly expressed in peripheral blood cells.

The protein localises to the nucleus. Functionally, regulates the proliferation and differentiation of hematopoietic cells. Overexpression block the TPA-induced megakaryocytic differentiation in the K562 cell model. May also prevent cell apoptosis through the activation of the nuclear factor-kappa B (NF-kB). The chain is Hemogen (Hemgn) from Mus musculus (Mouse).